Reading from the N-terminus, the 201-residue chain is 3-isopropylmalate dehydratase small subunit (201 aa).

Belongs to the LeuD family. LeuD type 1 subfamily. In terms of assembly, heterodimer of LeuC and LeuD.

The enzyme catalyses (2R,3S)-3-isopropylmalate = (2S)-2-isopropylmalate. Its pathway is amino-acid biosynthesis; L-leucine biosynthesis; L-leucine from 3-methyl-2-oxobutanoate: step 2/4. In terms of biological role, catalyzes the isomerization between 2-isopropylmalate and 3-isopropylmalate, via the formation of 2-isopropylmaleate. This is 3-isopropylmalate dehydratase small subunit from Paramagnetospirillum magneticum (strain ATCC 700264 / AMB-1) (Magnetospirillum magneticum).